The primary structure comprises 692 residues: Elongation factor G (692 aa).

The 275-residue stretch at 8–282 (EKTRNIGIMA…AVVEYMPAPT (275 aa)) folds into the tr-type G domain. Residues 17–24 (AHIDAGKT), 81–85 (DTPGH), and 135–138 (NKMD) contribute to the GTP site. Positions 285 to 304 (PNIKGVHPETGEADERHSSD) are disordered. Basic and acidic residues predominate over residues 290–304 (VHPETGEADERHSSD).

It belongs to the TRAFAC class translation factor GTPase superfamily. Classic translation factor GTPase family. EF-G/EF-2 subfamily.

The protein localises to the cytoplasm. In terms of biological role, catalyzes the GTP-dependent ribosomal translocation step during translation elongation. During this step, the ribosome changes from the pre-translocational (PRE) to the post-translocational (POST) state as the newly formed A-site-bound peptidyl-tRNA and P-site-bound deacylated tRNA move to the P and E sites, respectively. Catalyzes the coordinated movement of the two tRNA molecules, the mRNA and conformational changes in the ribosome. The polypeptide is Elongation factor G (Desulfitobacterium hafniense (strain DSM 10664 / DCB-2)).